A 198-amino-acid polypeptide reads, in one-letter code: Eukaryotic translation initiation factor isoform 4E (198 aa).

The disordered stretch occupies residues 1–25; sequence MATDDVNEPLPAAAELPATEAEKQP. Residue Ala-2 is modified to N-acetylalanine. Over residues 8 to 19 the composition is skewed to low complexity; that stretch reads EPLPAAAELPAT. Residues 46 to 47 and 92 to 93 contribute to the mRNA site; these read WG and WE. Cysteines 97 and 138 form a disulfide. 145–152 contributes to the mRNA binding site; the sequence is RPQSKQDK.

It belongs to the eukaryotic initiation factor 4E family. In terms of assembly, EIF4F is a multi-subunit complex, the composition of which varies with external and internal environmental conditions. It is composed of at least EIF4A, EIF4E and EIF4G. EIF4E is also known to interact with other partners. In higher plants two isoforms of EIF4F have been identified, named isoform EIF4F and isoform EIF(iso)4F. Isoform EIF4F has subunits p220 and p26, whereas isoform EIF(iso)4F has subunits p82 and p28. This isoform interacts with the viral protein genome linked (VPg)-proteinase of turnip mosaic potyvirus. Interacts directly with LOX2. Interacts with BTF3. In terms of processing, according to the redox status, the Cys-97-Cys-138 disulfide bridge may have a role in regulating protein function by affecting its ability to bind capped mRNA. Abundant in floral organs and in young developing tissues.

In terms of biological role, recognizes and binds the 7-methylguanosine-containing mRNA cap during an early step in the initiation of protein synthesis and facilitates ribosome binding by inducing the unwinding of the mRNAs secondary structures. Mediates susceptibility to Turnipmosaic potyvirus (TuMV) and Tobacco etch potyvirus (TEV). The polypeptide is Eukaryotic translation initiation factor isoform 4E (EIF(ISO)4E) (Arabidopsis thaliana (Mouse-ear cress)).